We begin with the raw amino-acid sequence, 188 residues long: Adenylate kinase (188 aa).

10 to 15 is a binding site for ATP; sequence GCGKGT. The segment at 30–59 is NMP; the sequence is STGDMLRHARAAGTELGRRVAAIMDGGNLV. AMP contacts are provided by residues T31, R36, 57 to 59, 85 to 88, and Q92; these read NLV and GFPR. An LID region spans residues 126-136; sequence KRAEEEGRPDD. R127 is a binding site for ATP. AMP-binding residues include R133 and R144. G172 lines the ATP pocket.

The protein belongs to the adenylate kinase family. As to quaternary structure, monomer.

Its subcellular location is the cytoplasm. The enzyme catalyses AMP + ATP = 2 ADP. It participates in purine metabolism; AMP biosynthesis via salvage pathway; AMP from ADP: step 1/1. In terms of biological role, catalyzes the reversible transfer of the terminal phosphate group between ATP and AMP. Plays an important role in cellular energy homeostasis and in adenine nucleotide metabolism. This is Adenylate kinase from Maricaulis maris (strain MCS10) (Caulobacter maris).